The chain runs to 352 residues: MKIDTFIFLMFISIGILLLLLNIINPMEVFHIVEWKTIFSLFYLMVIINIMRDTKFLDYISLKILKKSKRIFIALIFLTLFLSSLITNDVSLFVIIPLTLIIHRYTNMPFKDLEKLIIFEGVSANIGSGLTPIGNPQNLFLFHFYNIGTLEFIINMIPFEIFGILAILPFLEFKKYDTKINIDIKFKKEWIFYILSFILVLLCVFGYLNFIYILPLILAILMYKRVKVDYLFLLTFIFLFVDIEGLKRIGIINIFSIKCGNVMLMIYASLLSQIISNVPATVLLSHLYKNWLPIAYGVNIGGNGTLIASFANLITLRLSNGNVRVGRFLLIGGIIYIMHLIVLVAYAKIFWV.

8 helical membrane-spanning segments follow: residues 6–26 (FIFL…IINP), 30–50 (FHIV…IINI), 76–96 (IFLT…FVII), 151–171 (EFII…LPFL), 197–217 (FILV…LPLI), 226–246 (VKVD…IEGL), 291–311 (WLPI…ASFA), and 330–350 (LIGG…AKIF).

The protein belongs to the CitM (TC 2.A.11) transporter family.

The protein localises to the cell membrane. This is an uncharacterized protein from Methanocaldococcus jannaschii (strain ATCC 43067 / DSM 2661 / JAL-1 / JCM 10045 / NBRC 100440) (Methanococcus jannaschii).